The primary structure comprises 368 residues: Protein-glutamate methylesterase/protein-glutamine glutaminase (368 aa).

Positions 9 to 126 (RVLVVDDSAF…SINMRELKDE (118 aa)) constitute a Response regulatory domain. Aspartate 60 is subject to 4-aspartylphosphate. The CheB-type methylesterase domain occupies 161-354 (SVPARIAVAI…ETVVRAVEMI (194 aa)). Catalysis depends on residues serine 173, histidine 200, and aspartate 296.

This sequence belongs to the CheB family. Post-translationally, phosphorylated by CheA. Phosphorylation of the N-terminal regulatory domain activates the methylesterase activity.

The protein resides in the cytoplasm. It carries out the reaction [protein]-L-glutamate 5-O-methyl ester + H2O = L-glutamyl-[protein] + methanol + H(+). The enzyme catalyses L-glutaminyl-[protein] + H2O = L-glutamyl-[protein] + NH4(+). Involved in chemotaxis. Part of a chemotaxis signal transduction system that modulates chemotaxis in response to various stimuli. Catalyzes the demethylation of specific methylglutamate residues introduced into the chemoreceptors (methyl-accepting chemotaxis proteins or MCP) by CheR. Also mediates the irreversible deamidation of specific glutamine residues to glutamic acid. The chain is Protein-glutamate methylesterase/protein-glutamine glutaminase from Pyrococcus abyssi (strain GE5 / Orsay).